A 230-amino-acid chain; its full sequence is tRNA (cytidine-2'-O-)-methyltransferase TrmJ (230 aa).

Residues 79-81 (TSG), glycine 115, isoleucine 135, and 142-144 (PIM) contribute to the S-adenosyl-L-methionine site.

It belongs to the class IV-like SAM-binding methyltransferase superfamily. RNA methyltransferase TrmH family. As to quaternary structure, homodimer.

It is found in the cytoplasm. The enzyme catalyses cytidine(32) in tRNA + S-adenosyl-L-methionine = 2'-O-methylcytidine(32) in tRNA + S-adenosyl-L-homocysteine + H(+). Functionally, catalyzes the formation of 2'O-methylated cytidine (Cm32) at position 32 in tRNA. The polypeptide is tRNA (cytidine-2'-O-)-methyltransferase TrmJ (Methanocaldococcus jannaschii (strain ATCC 43067 / DSM 2661 / JAL-1 / JCM 10045 / NBRC 100440) (Methanococcus jannaschii)).